The primary structure comprises 88 residues: Large ribosomal subunit protein bL27 (88 aa).

The tract at residues 1–24 is disordered; sequence MAHKKGTGSTRNGRDSNSKRLGVK.

This sequence belongs to the bacterial ribosomal protein bL27 family.

The protein is Large ribosomal subunit protein bL27 of Synechococcus sp. (strain CC9311).